The following is a 413-amino-acid chain: ATP phosphoribosyltransferase regulatory subunit (413 aa).

A disordered region spans residues 1 to 21 (MRSRAARKFSTTPGTRDVLPP).

The protein belongs to the class-II aminoacyl-tRNA synthetase family. HisZ subfamily. In terms of assembly, heteromultimer composed of HisG and HisZ subunits.

The protein localises to the cytoplasm. The protein operates within amino-acid biosynthesis; L-histidine biosynthesis; L-histidine from 5-phospho-alpha-D-ribose 1-diphosphate: step 1/9. Required for the first step of histidine biosynthesis. May allow the feedback regulation of ATP phosphoribosyltransferase activity by histidine. The sequence is that of ATP phosphoribosyltransferase regulatory subunit from Rubrobacter xylanophilus (strain DSM 9941 / JCM 11954 / NBRC 16129 / PRD-1).